Consider the following 486-residue polypeptide: Protein DETOXIFICATION 27 (486 aa).

The disordered stretch occupies residues 1–25 (MRGGDGEEGSESRVALLKSPHTAEE). The next 12 helical transmembrane spans lie at 41–61 (LWQI…MLVI), 74–94 (LAAI…LLLG), 124–144 (IVLF…TPVL), 153–173 (IAEL…AFTL), 189–209 (VTAY…WLFV), 216–236 (VVGT…ILLV), 269–289 (GVML…TGNL), 299–319 (LSIC…FFAG), 349–369 (IIGL…AWIF), 384–404 (LLLA…GVAV), 407–427 (GWQS…GVPL), and 439–461 (VMGI…LSFI).

Belongs to the multi antimicrobial extrusion (MATE) (TC 2.A.66.1) family.

The protein resides in the membrane. This chain is Protein DETOXIFICATION 27, found in Arabidopsis thaliana (Mouse-ear cress).